A 388-amino-acid polypeptide reads, in one-letter code: Chorismate synthase (388 aa).

NADP(+)-binding residues include Arg39 and Arg45. A disordered region spans residues 95 to 118; it reads EKNEKSRRVSRPRPGHADLVGGMK. FMN-binding positions include 130 to 132, 251 to 252, Gly296, 311 to 315, and Arg337; these read RSS, NA, and KPIPT.

The protein belongs to the chorismate synthase family. In terms of assembly, homotetramer. Requires FMNH2 as cofactor.

It carries out the reaction 5-O-(1-carboxyvinyl)-3-phosphoshikimate = chorismate + phosphate. The protein operates within metabolic intermediate biosynthesis; chorismate biosynthesis; chorismate from D-erythrose 4-phosphate and phosphoenolpyruvate: step 7/7. In terms of biological role, catalyzes the anti-1,4-elimination of the C-3 phosphate and the C-6 proR hydrogen from 5-enolpyruvylshikimate-3-phosphate (EPSP) to yield chorismate, which is the branch point compound that serves as the starting substrate for the three terminal pathways of aromatic amino acid biosynthesis. This reaction introduces a second double bond into the aromatic ring system. In Listeria welshimeri serovar 6b (strain ATCC 35897 / DSM 20650 / CCUG 15529 / CIP 8149 / NCTC 11857 / SLCC 5334 / V8), this protein is Chorismate synthase.